The sequence spans 191 residues: dCTP deaminase, dUMP-forming (191 aa).

DCTP is bound by residues 101–106, Asp119, 127–129, Gln148, Tyr162, and Gln174; these read KSSLGR and TLE. The active-site Proton donor/acceptor is Glu129. A disordered region spans residues 169–191; sequence NRYQGQRGPTASRSHLNFHRTRI. Over residues 171 to 183 the composition is skewed to polar residues; it reads YQGQRGPTASRSH.

The protein belongs to the dCTP deaminase family. In terms of assembly, homotrimer.

It carries out the reaction dCTP + 2 H2O = dUMP + NH4(+) + diphosphate. Its pathway is pyrimidine metabolism; dUMP biosynthesis; dUMP from dCTP: step 1/1. In terms of biological role, bifunctional enzyme that catalyzes both the deamination of dCTP to dUTP and the hydrolysis of dUTP to dUMP without releasing the toxic dUTP intermediate. The sequence is that of dCTP deaminase, dUMP-forming from Pseudarthrobacter chlorophenolicus (strain ATCC 700700 / DSM 12829 / CIP 107037 / JCM 12360 / KCTC 9906 / NCIMB 13794 / A6) (Arthrobacter chlorophenolicus).